The following is a 347-amino-acid chain: Protein RecA (347 aa).

Residue 64–71 (GPESSGKT) coordinates ATP. The interval 328–347 (DKVDEDKTEEEASQESLDLK) is disordered.

It belongs to the RecA family.

It is found in the cytoplasm. Its function is as follows. Can catalyze the hydrolysis of ATP in the presence of single-stranded DNA, the ATP-dependent uptake of single-stranded DNA by duplex DNA, and the ATP-dependent hybridization of homologous single-stranded DNAs. It interacts with LexA causing its activation and leading to its autocatalytic cleavage. The protein is Protein RecA of Oceanobacillus iheyensis (strain DSM 14371 / CIP 107618 / JCM 11309 / KCTC 3954 / HTE831).